Consider the following 46-residue polypeptide: Acetylajmalan esterase (46 aa).

Asn39 carries an N-linked (GlcNAc...) asparagine glycan.

Belongs to the 'GDSL' lipolytic enzyme family.

The catalysed reaction is 17-O-acetylajmaline + H2O = ajmaline + acetate + H(+). It catalyses the reaction 17-O-acetylnorajmaline + H2O = norajmaline + acetate + H(+). Its function is as follows. Deacetylates 17-O-acetylajmaline and 17-O-acetylnorajmaline, but is inactive toward other acetylated alkaloids. This is Acetylajmalan esterase from Rauvolfia verticillata (Common devil-pepper).